Consider the following 60-residue polypeptide: Acidic phospholipase A2 (60 aa).

The Ca(2+) site is built by Y27, G29, and G31. A disulfide bridge connects residues C28 and C44. The active site involves H47. D48 provides a ligand contact to Ca(2+).

This sequence belongs to the phospholipase A2 family. Group II subfamily. D49 sub-subfamily. Monomer. The cofactor is Ca(2+). In terms of tissue distribution, expressed by the venom gland.

The protein resides in the secreted. The enzyme catalyses a 1,2-diacyl-sn-glycero-3-phosphocholine + H2O = a 1-acyl-sn-glycero-3-phosphocholine + a fatty acid + H(+). In terms of biological role, snake venom phospholipase A2 (PLA2) that exhibits an indirect hemolytic activity, a low myotoxicity, and induces edema. In addition, this enzyme has been shown to induce the release of some pro- and anti-inflammatory cytokines from human PBMC (IL12B, TNF-alpha, IL1B and IL6 but not variation has been observed for IL-8 and IL-10). PLA2 catalyzes the calcium-dependent hydrolysis of the 2-acyl groups in 3-sn-phosphoglycerides. This chain is Acidic phospholipase A2, found in Bothrops leucurus (Whitetail lancehead).